Consider the following 257-residue polypeptide: Diphthine synthase (257 aa).

S-adenosyl-L-methionine-binding positions include L9, D85, V88, 113-114, L164, A207, and H232; that span reads SI.

Belongs to the diphthine synthase family. In terms of assembly, homodimer.

The catalysed reaction is 2-[(3S)-amino-3-carboxypropyl]-L-histidyl-[translation elongation factor 2] + 3 S-adenosyl-L-methionine = diphthine-[translation elongation factor 2] + 3 S-adenosyl-L-homocysteine + 3 H(+). The protein operates within protein modification; peptidyl-diphthamide biosynthesis. S-adenosyl-L-methionine-dependent methyltransferase that catalyzes the trimethylation of the amino group of the modified target histidine residue in translation elongation factor 2 (EF-2), to form an intermediate called diphthine. The three successive methylation reactions represent the second step of diphthamide biosynthesis. The protein is Diphthine synthase of Methanococcus aeolicus (strain ATCC BAA-1280 / DSM 17508 / OCM 812 / Nankai-3).